A 188-amino-acid polypeptide reads, in one-letter code: Pyridoxal 5'-phosphate synthase subunit PdxT (188 aa).

Residue 47–49 (GES) participates in L-glutamine binding. Catalysis depends on Cys79, which acts as the Nucleophile. L-glutamine-binding positions include Arg105 and 134-135 (IR). Catalysis depends on charge relay system residues His170 and Glu172.

This sequence belongs to the glutaminase PdxT/SNO family. In terms of assembly, in the presence of PdxS, forms a dodecamer of heterodimers. Only shows activity in the heterodimer.

The catalysed reaction is aldehydo-D-ribose 5-phosphate + D-glyceraldehyde 3-phosphate + L-glutamine = pyridoxal 5'-phosphate + L-glutamate + phosphate + 3 H2O + H(+). The enzyme catalyses L-glutamine + H2O = L-glutamate + NH4(+). It participates in cofactor biosynthesis; pyridoxal 5'-phosphate biosynthesis. Its function is as follows. Catalyzes the hydrolysis of glutamine to glutamate and ammonia as part of the biosynthesis of pyridoxal 5'-phosphate. The resulting ammonia molecule is channeled to the active site of PdxS. The polypeptide is Pyridoxal 5'-phosphate synthase subunit PdxT (Listeria monocytogenes serotype 4a (strain HCC23)).